The following is a 339-amino-acid chain: 3-isopropylmalate dehydrogenase (339 aa).

The substrate site is built by arginine 88, arginine 98, arginine 122, and aspartate 212. The Mg(2+) site is built by aspartate 212, aspartate 236, and aspartate 240. 272–284 (GSAPDIAGQGIAD) lines the NAD(+) pocket.

The protein belongs to the isocitrate and isopropylmalate dehydrogenases family. LeuB type 2 subfamily. As to quaternary structure, homodimer. Mg(2+) serves as cofactor. Mn(2+) is required as a cofactor.

Its subcellular location is the cytoplasm. It catalyses the reaction (2R,3S)-3-isopropylmalate + NAD(+) = 4-methyl-2-oxopentanoate + CO2 + NADH. Its pathway is amino-acid biosynthesis; L-leucine biosynthesis; L-leucine from 3-methyl-2-oxobutanoate: step 3/4. In terms of biological role, catalyzes the oxidation of 3-carboxy-2-hydroxy-4-methylpentanoate (3-isopropylmalate) to 3-carboxy-4-methyl-2-oxopentanoate. The product decarboxylates to 4-methyl-2 oxopentanoate. This Corynebacterium diphtheriae (strain ATCC 700971 / NCTC 13129 / Biotype gravis) protein is 3-isopropylmalate dehydrogenase.